A 248-amino-acid chain; its full sequence is tRNA pseudouridine synthase A (248 aa).

D53 serves as the catalytic Nucleophile. Substrate is bound at residue Y111.

The protein belongs to the tRNA pseudouridine synthase TruA family. In terms of assembly, homodimer.

The catalysed reaction is uridine(38/39/40) in tRNA = pseudouridine(38/39/40) in tRNA. Its function is as follows. Formation of pseudouridine at positions 38, 39 and 40 in the anticodon stem and loop of transfer RNAs. This Listeria welshimeri serovar 6b (strain ATCC 35897 / DSM 20650 / CCUG 15529 / CIP 8149 / NCTC 11857 / SLCC 5334 / V8) protein is tRNA pseudouridine synthase A.